A 453-amino-acid polypeptide reads, in one-letter code: AP-4 complex subunit mu-1 (453 aa).

An MHD domain is found at 184–452; sequence KNEVFLDVVE…LSHSDAYVIR (269 aa).

The protein belongs to the adaptor complexes medium subunit family. In terms of assembly, adaptor protein complex 4 (AP-4) is a heterotetramer composed of two large adaptins (epsilon-type subunit AP4E1 and beta-type subunit AP4B1), a medium adaptin (mu-type subunit AP4M1) and a small adaptin (sigma-type AP4S1). Interacts with tyrosine-based sorting signals on the cytoplasmic tail of cargo proteins such as APP, ATG9A, LAMP2 and NAGPA. Interacts with the C-terminal domain of GRID2. Interacts with GRIA1 and GRIA2; the interaction is indirect via CACNG3. Interacts with CACNG3; CACNG3 associates GRIA1 and GRIA2 with the adaptor protein complex 4 (AP-4) to target them to the somatodendritic compartment of neurons. Interacts with HOOK1 and HOOK2; the interactions are direct, mediate the interaction between FTS-Hook-FHIP (FHF) complex and AP-4 and the perinuclear distribution of AP-4. In terms of tissue distribution, ubiquitous. Highly expressed in testis and lowly expressed in brain and lung.

It localises to the golgi apparatus. Its subcellular location is the trans-Golgi network membrane. The protein resides in the early endosome. Functionally, component of the adaptor protein complex 4 (AP-4). Adaptor protein complexes are vesicle coat components involved both in vesicle formation and cargo selection. They control the vesicular transport of proteins in different trafficking pathways. AP-4 forms a non clathrin-associated coat on vesicles departing the trans-Golgi network (TGN) and may be involved in the targeting of proteins from the trans-Golgi network (TGN) to the endosomal-lysosomal system. It is also involved in protein sorting to the basolateral membrane in epithelial cells and the proper asymmetric localization of somatodendritic proteins in neurons. Within AP-4, the mu-type subunit AP4M1 is directly involved in the recognition and binding of tyrosine-based sorting signals found in the cytoplasmic part of cargos. The adaptor protein complex 4 (AP-4) may also recognize other types of sorting signal. This is AP-4 complex subunit mu-1 from Homo sapiens (Human).